The following is a 472-amino-acid chain: Collagenase 3 (472 aa).

The N-terminal stretch at 1–19 is a signal peptide; that stretch reads MHPGVLAAFLFLSWTRCWS. Residues 20-104 constitute a propeptide, activation peptide; that stretch reads LPVPNDDDDD…PRCGVPDVGE (85 aa). The Cysteine switch motif lies at 95-102; the sequence is PRCGVPDV. Cys-97 serves as a coordination point for Zn(2+). Asn-118 carries N-linked (GlcNAc...) asparagine glycosylation. Asp-129 is a binding site for Ca(2+). Asn-153 and Asn-159 each carry an N-linked (GlcNAc...) asparagine glycan. Asp-163 lines the Ca(2+) pocket. The Zn(2+) site is built by His-173 and Asp-175. The interaction with TIMP2 stretch occupies residues 177 to 247; that stretch reads YPFDGPSGLL…GALMFPIYTY (71 aa). Ca(2+) is bound by residues Asp-180, Gly-181, Ser-183, and Leu-185. Position 188 (His-188) interacts with Zn(2+). Ca(2+) is bound by residues Asn-195, Gly-197, and Asp-199. Residue His-201 coordinates Zn(2+). Ca(2+) contacts are provided by Asp-203, Asp-204, and Glu-206. His-223 contacts Zn(2+). Glu-224 is a catalytic residue. Residues His-227, His-233, and Met-241 each coordinate Zn(2+). The segment at 269–472 is interaction with collagen; the sequence is PGDEDPNPKH…VMPTNSLLWC (204 aa). 4 Hemopexin repeats span residues 282 to 331, 332 to 378, 380 to 428, and 429 to 472; these read PDKC…WPEL, PNRI…GFPK, VKKI…FPGI, and GDKV…LLWC. An intrachain disulfide couples Cys-285 to Cys-472. Residues Asp-292, Ile-294, Asp-336, and Ala-338 each contribute to the Ca(2+) site. Tyr-367 is modified (phosphotyrosine; by PKDCC). Residues Ser-384, Ala-386, Asp-433, and Val-435 each coordinate Ca(2+).

It belongs to the peptidase M10A family. Ca(2+) serves as cofactor. Zn(2+) is required as a cofactor. The proenzyme is activated by removal of the propeptide; this cleavage can be effected by other matrix metalloproteinases, such as MMP2, MMP3 and MMP14 and may involve several cleavage steps. Cleavage can also be autocatalytic, after partial maturation by another protease or after treatment with 4-aminophenylmercuric acetate (APMA) (in vitro). Post-translationally, N-glycosylated. In terms of processing, tyrosine phosphorylated by PKDCC/VLK. As to expression, seems to be specific to breast carcinomas.

The protein localises to the secreted. The protein resides in the extracellular space. Its subcellular location is the extracellular matrix. In terms of biological role, plays a role in the degradation of extracellular matrix proteins including fibrillar collagen, fibronectin, TNC and ACAN. Cleaves triple helical collagens, including type I, type II and type III collagen, but has the highest activity with soluble type II collagen. Can also degrade collagen type IV, type XIV and type X. May also function by activating or degrading key regulatory proteins, such as TGFB1 and CCN2. Plays a role in wound healing, tissue remodeling, cartilage degradation, bone development, bone mineralization and ossification. Required for normal embryonic bone development and ossification. Plays a role in the healing of bone fractures via endochondral ossification. Plays a role in wound healing, probably by a mechanism that involves proteolytic activation of TGFB1 and degradation of CCN2. Plays a role in keratinocyte migration during wound healing. May play a role in cell migration and in tumor cell invasion. This Equus caballus (Horse) protein is Collagenase 3 (MMP13).